The sequence spans 225 residues: NAD(P)H-quinone oxidoreductase subunit K, chloroplastic (225 aa).

4 residues coordinate [4Fe-4S] cluster: Cys43, Cys44, Cys108, and Cys139.

It belongs to the complex I 20 kDa subunit family. As to quaternary structure, NDH is composed of at least 16 different subunits, 5 of which are encoded in the nucleus. The cofactor is [4Fe-4S] cluster.

The protein resides in the plastid. The protein localises to the chloroplast thylakoid membrane. The enzyme catalyses a plastoquinone + NADH + (n+1) H(+)(in) = a plastoquinol + NAD(+) + n H(+)(out). It carries out the reaction a plastoquinone + NADPH + (n+1) H(+)(in) = a plastoquinol + NADP(+) + n H(+)(out). Its function is as follows. NDH shuttles electrons from NAD(P)H:plastoquinone, via FMN and iron-sulfur (Fe-S) centers, to quinones in the photosynthetic chain and possibly in a chloroplast respiratory chain. The immediate electron acceptor for the enzyme in this species is believed to be plastoquinone. Couples the redox reaction to proton translocation, and thus conserves the redox energy in a proton gradient. The protein is NAD(P)H-quinone oxidoreductase subunit K, chloroplastic of Populus trichocarpa (Western balsam poplar).